The chain runs to 215 residues: uncharacterized protein (215 aa).

This is an uncharacterized protein from Archaeoglobus fulgidus (strain ATCC 49558 / DSM 4304 / JCM 9628 / NBRC 100126 / VC-16).